Reading from the N-terminus, the 345-residue chain is Phenylalanine--tRNA ligase alpha subunit (345 aa).

Glu253 is a binding site for Mg(2+).

Belongs to the class-II aminoacyl-tRNA synthetase family. Phe-tRNA synthetase alpha subunit type 1 subfamily. In terms of assembly, tetramer of two alpha and two beta subunits. Mg(2+) is required as a cofactor.

Its subcellular location is the cytoplasm. It catalyses the reaction tRNA(Phe) + L-phenylalanine + ATP = L-phenylalanyl-tRNA(Phe) + AMP + diphosphate + H(+). The protein is Phenylalanine--tRNA ligase alpha subunit of Nitratidesulfovibrio vulgaris (strain DSM 19637 / Miyazaki F) (Desulfovibrio vulgaris).